A 153-amino-acid chain; its full sequence is Arginine repressor (153 aa).

This sequence belongs to the ArgR family.

The protein resides in the cytoplasm. It participates in amino-acid biosynthesis; L-arginine biosynthesis [regulation]. Its function is as follows. Regulates arginine biosynthesis genes. This Haemophilus ducreyi (strain 35000HP / ATCC 700724) protein is Arginine repressor.